The primary structure comprises 493 residues: Ribose import ATP-binding protein RbsA (493 aa).

ABC transporter domains are found at residues 5–241 (LKIS…VGRR) and 252–491 (EKGE…AAAI). Residue 37-44 (GENGAGKS) coordinates ATP.

The protein belongs to the ABC transporter superfamily. Ribose importer (TC 3.A.1.2.1) family. In terms of assembly, the complex is composed of an ATP-binding protein (RbsA), two transmembrane proteins (RbsC) and a solute-binding protein (RbsB).

It localises to the cell inner membrane. The enzyme catalyses D-ribose(out) + ATP + H2O = D-ribose(in) + ADP + phosphate + H(+). Functionally, part of the ABC transporter complex RbsABC involved in ribose import. Responsible for energy coupling to the transport system. In Haemophilus influenzae (strain ATCC 51907 / DSM 11121 / KW20 / Rd), this protein is Ribose import ATP-binding protein RbsA.